The following is a 364-amino-acid chain: Methylthioribose-1-phosphate isomerase (364 aa).

Substrate-binding positions include 49-51 (RGA), Arg89, and Gln201. Residue Asp242 is the Proton donor of the active site. Residue 252–253 (NK) participates in substrate binding.

The protein belongs to the eIF-2B alpha/beta/delta subunits family. MtnA subfamily.

The enzyme catalyses 5-(methylsulfanyl)-alpha-D-ribose 1-phosphate = 5-(methylsulfanyl)-D-ribulose 1-phosphate. It participates in amino-acid biosynthesis; L-methionine biosynthesis via salvage pathway; L-methionine from S-methyl-5-thio-alpha-D-ribose 1-phosphate: step 1/6. Functionally, catalyzes the interconversion of methylthioribose-1-phosphate (MTR-1-P) into methylthioribulose-1-phosphate (MTRu-1-P). This is Methylthioribose-1-phosphate isomerase from Leptospira interrogans serogroup Icterohaemorrhagiae serovar Lai (strain 56601).